The sequence spans 432 residues: uncharacterized protein (432 aa).

The next 13 helical transmembrane spans lie at 7–27 (FIGLGIITASLIFGSSLPDIY), 29–49 (GIVILIVAGCLWFFELLPLPV), 68–88 (EALTYFAHPIIFLFLGGFMLA), 124–144 (FLSMWISNTSATLILLPIALG), 156–176 (FLLLGVAYSASIGGIATIIGS), 196–216 (VGFPISLLLFLICTLTLYIYF), 241–261 (LVIFVLIASLWIISDYLSEIF), 266–286 (FDSVIAIFAIILLFVFNLVEV), 291–311 (KIDWGTLILFGGALCLGGVIV), 326–346 (ILGNLTPIVLLFLVVTITIIL), 358–378 (IIVPILFGVSLGIPKEILILA), 379–399 (VGMSASCSFILPVGTPPNAIV), and 412–432 (IGMILSILSAAVITLYSILYL).

It belongs to the CitM (TC 2.A.11) transporter family.

The protein localises to the cell membrane. This is an uncharacterized protein from Methanocaldococcus jannaschii (strain ATCC 43067 / DSM 2661 / JAL-1 / JCM 10045 / NBRC 100440) (Methanococcus jannaschii).